The chain runs to 322 residues: Anthranilate phosphoribosyltransferase (322 aa).

Residues G71, G74–D75, T79, N81–T84, K99–G107, and A111 each bind 5-phospho-alpha-D-ribose 1-diphosphate. G71 provides a ligand contact to anthranilate. Residue S83 participates in Mg(2+) binding. N102 serves as a coordination point for anthranilate. Residue R157 participates in anthranilate binding. Mg(2+) is bound by residues D215 and E216.

Belongs to the anthranilate phosphoribosyltransferase family. As to quaternary structure, homodimer. Requires Mg(2+) as cofactor.

The enzyme catalyses N-(5-phospho-beta-D-ribosyl)anthranilate + diphosphate = 5-phospho-alpha-D-ribose 1-diphosphate + anthranilate. The protein operates within amino-acid biosynthesis; L-tryptophan biosynthesis; L-tryptophan from chorismate: step 2/5. Functionally, catalyzes the transfer of the phosphoribosyl group of 5-phosphorylribose-1-pyrophosphate (PRPP) to anthranilate to yield N-(5'-phosphoribosyl)-anthranilate (PRA). In Thermoplasma acidophilum (strain ATCC 25905 / DSM 1728 / JCM 9062 / NBRC 15155 / AMRC-C165), this protein is Anthranilate phosphoribosyltransferase.